The following is a 351-amino-acid chain: Phenylalanine--tRNA ligase alpha subunit (351 aa).

Residue glutamate 266 coordinates Mg(2+).

It belongs to the class-II aminoacyl-tRNA synthetase family. Phe-tRNA synthetase alpha subunit type 1 subfamily. Tetramer of two alpha and two beta subunits. Mg(2+) serves as cofactor.

The protein localises to the cytoplasm. The enzyme catalyses tRNA(Phe) + L-phenylalanine + ATP = L-phenylalanyl-tRNA(Phe) + AMP + diphosphate + H(+). This Anaplasma marginale (strain St. Maries) protein is Phenylalanine--tRNA ligase alpha subunit.